Consider the following 185-residue polypeptide: Ribosome-recycling factor (185 aa).

Belongs to the RRF family.

Its subcellular location is the cytoplasm. Its function is as follows. Responsible for the release of ribosomes from messenger RNA at the termination of protein biosynthesis. May increase the efficiency of translation by recycling ribosomes from one round of translation to another. The polypeptide is Ribosome-recycling factor (Streptococcus thermophilus (strain ATCC BAA-491 / LMD-9)).